The chain runs to 54 residues: MLYYALVFFIVALIAAIFGFGGIAAGAVEIAKILFLIFLVVAIVTFVMGLVRRR.

Transmembrane regions (helical) follow at residues 5–25 (ALVF…GIAA) and 30–50 (IAKI…VMGL).

It belongs to the UPF0391 family.

It localises to the cell membrane. The polypeptide is UPF0391 membrane protein Rmet_0093 (Cupriavidus metallidurans (strain ATCC 43123 / DSM 2839 / NBRC 102507 / CH34) (Ralstonia metallidurans)).